Reading from the N-terminus, the 203-residue chain is LexA repressor (203 aa).

Positions 30 to 50 form a DNA-binding region, H-T-H motif; sequence VREICQAVSLKSTSTVHGHLK. Active-site for autocatalytic cleavage activity residues include Ser127 and Lys164.

The protein belongs to the peptidase S24 family. Homodimer.

It carries out the reaction Hydrolysis of Ala-|-Gly bond in repressor LexA.. Its function is as follows. Represses a number of genes involved in the response to DNA damage (SOS response), including recA and lexA. In the presence of single-stranded DNA, RecA interacts with LexA causing an autocatalytic cleavage which disrupts the DNA-binding part of LexA, leading to derepression of the SOS regulon and eventually DNA repair. The chain is LexA repressor from Clostridium perfringens (strain SM101 / Type A).